A 205-amino-acid chain; its full sequence is Large ribosomal subunit protein uL4 (205 aa).

The segment at 43-77 (RRRSGTASTKGRSDVAGSRAKLFRQKGTGRARRGD) is disordered. The span at 63-73 (KLFRQKGTGRA) shows a compositional bias: basic residues.

It belongs to the universal ribosomal protein uL4 family. Part of the 50S ribosomal subunit.

One of the primary rRNA binding proteins, this protein initially binds near the 5'-end of the 23S rRNA. It is important during the early stages of 50S assembly. It makes multiple contacts with different domains of the 23S rRNA in the assembled 50S subunit and ribosome. Its function is as follows. Forms part of the polypeptide exit tunnel. The chain is Large ribosomal subunit protein uL4 from Desulfosudis oleivorans (strain DSM 6200 / JCM 39069 / Hxd3) (Desulfococcus oleovorans).